The sequence spans 561 residues: Putative transport protein YbjL (561 aa).

The next 5 membrane-spanning stretches (helical) occupy residues 8-28 (LLNG…LCLG), 32-52 (LGSV…LLGQ), 66-86 (FMLF…SIFF), 94-114 (MLAL…GKLF), and 158-178 (NLSL…IVGA). 2 RCK C-terminal domains span residues 200 to 288 (RGLD…SFRN) and 292 to 373 (VFDR…RIGF). 5 consecutive transmembrane segments (helical) span residues 383-403 (LLAF…TFQF), 406-426 (FSFG…LGFL), 447-467 (FGLM…INNG), 475-495 (MLIA…LFGA), and 540-560 (AIAN…WPGL).

This sequence belongs to the AAE transporter (TC 2.A.81) family. YbjL subfamily.

The protein resides in the cell membrane. This is Putative transport protein YbjL from Salmonella paratyphi C (strain RKS4594).